The primary structure comprises 559 residues: Formate--tetrahydrofolate ligase (559 aa).

An ATP-binding site is contributed by 68–75 (TPAGEGKT).

It belongs to the formate--tetrahydrofolate ligase family. In terms of assembly, homotetramer.

It catalyses the reaction (6S)-5,6,7,8-tetrahydrofolate + formate + ATP = (6R)-10-formyltetrahydrofolate + ADP + phosphate. Its pathway is one-carbon metabolism; tetrahydrofolate interconversion. The chain is Formate--tetrahydrofolate ligase from Moorella thermoacetica (Clostridium thermoaceticum).